The chain runs to 602 residues: Elongation factor 4 (602 aa).

The region spanning 7-196 (SKIRNFCIIA…HPQNEIKSPT (190 aa)) is the tr-type G domain. GTP-binding positions include 19–24 (DHGKST) and 136–139 (NKVD).

This sequence belongs to the TRAFAC class translation factor GTPase superfamily. Classic translation factor GTPase family. LepA subfamily.

Its subcellular location is the cell inner membrane. It catalyses the reaction GTP + H2O = GDP + phosphate + H(+). Functionally, required for accurate and efficient protein synthesis under certain stress conditions. May act as a fidelity factor of the translation reaction, by catalyzing a one-codon backward translocation of tRNAs on improperly translocated ribosomes. Back-translocation proceeds from a post-translocation (POST) complex to a pre-translocation (PRE) complex, thus giving elongation factor G a second chance to translocate the tRNAs correctly. Binds to ribosomes in a GTP-dependent manner. This chain is Elongation factor 4, found in Prochlorococcus marinus (strain MIT 9515).